Here is a 410-residue protein sequence, read N- to C-terminus: Lissencephaly-1 homolog (410 aa).

Residues 7-39 (QRDELNRAIADYLRSNGYEEAYSVFKKEAELDM) form the LisH domain. The stretch at 56–82 (TSVIRLQKKVMELESKLNEAKEEFTSG) forms a coiled coil. WD repeat units lie at residues 106-147 (GHRS…RTLK), 148-187 (GHTD…CIRT), 190-229 (GHDH…CVKT), 232-271 (GHRE…CKAE), 274-333 (EHEH…CLMT), 336-377 (GHDN…KTLN), and 379-410 (HEHF…WECR).

This sequence belongs to the WD repeat LIS1/nudF family. As to quaternary structure, can self-associate. Component of the cytosolic PAF-AH (I) heterotetrameric enzyme, which is composed of PAFAH1B1 (beta), PAFAH1B2 (alpha2) and PAFAH1B3 (alpha1) subunits. The catalytic activity of the enzyme resides in the alpha1 (PAFAH1B3) and alpha2 (PAFAH1B2) subunits, whereas the beta subunit (PAFAH1B1) has regulatory activity. Trimer formation is not essential for the catalytic activity. Interacts with dynein, dynactin, nde1 and ndel1.

It localises to the cytoplasm. The protein localises to the cytoskeleton. Its subcellular location is the microtubule organizing center. The protein resides in the centrosome. Regulatory subunit (beta subunit) of the cytosolic type I platelet-activating factor (PAF) acetylhydrolase (PAF-AH (I)), an enzyme that catalyzes the hydrolyze of the acetyl group at the sn-2 position of PAF and its analogs and participates in the PAF inactivation. Positively regulates the activity of the minus-end directed microtubule motor protein dynein. May enhance dynein-mediated microtubule sliding by targeting dynein to the microtubule plus end. Required for several dynein- and microtubule-dependent processes such as the maintenance of Golgi integrity, the peripheral transport of microtubule fragments and the coupling of the nucleus and centrosome. May be required for proliferation of neuronal precursors and neuronal migration. The polypeptide is Lissencephaly-1 homolog (pafah1b1) (Xenopus tropicalis (Western clawed frog)).